A 305-amino-acid chain; its full sequence is tRNA uridine(34) hydroxylase (305 aa).

One can recognise a Rhodanese domain in the interval 125 to 219 (ADENTVVVDK…YLEEVPREQS (95 aa)). C179 acts as the Cysteine persulfide intermediate in catalysis.

Belongs to the TrhO family.

It carries out the reaction uridine(34) in tRNA + AH2 + O2 = 5-hydroxyuridine(34) in tRNA + A + H2O. Functionally, catalyzes oxygen-dependent 5-hydroxyuridine (ho5U) modification at position 34 in tRNAs. The chain is tRNA uridine(34) hydroxylase from Brucella abortus (strain S19).